The chain runs to 259 residues: UPF0246 protein NMCC_0856 (259 aa).

Belongs to the UPF0246 family.

The protein is UPF0246 protein NMCC_0856 of Neisseria meningitidis serogroup C (strain 053442).